An 809-amino-acid chain; its full sequence is PiggyBac transposable element-derived protein 1 (809 aa).

An SCAN box domain is found at 44–126 (RLRFRHFCYQ…TVLENLETGS (83 aa)). A disordered region spans residues 170-199 (CEPPQRPQGNPQEVSGPVPHGSAHLQEKNP). Lys-218 is covalently cross-linked (Glycyl lysine isopeptide (Lys-Gly) (interchain with G-Cter in SUMO2)). The segment at 271-297 (KQETSEEMEQSGEASGKPNRECAPQIP) is disordered. At Ser-360 the chain carries Phosphoserine.

The chain is PiggyBac transposable element-derived protein 1 (PGBD1) from Homo sapiens (Human).